A 203-amino-acid chain; its full sequence is MELATMKTLVMLVLGMHYWCASGFPVYDYDPSSLQEALSASVAKVNSQSLSPYLFRATRSSLKRVNVLDEDTLVMNLEFTVQETTCLRESGDPSTCAFQRGYSVPTAACRSTVQMSKGQVKDVWAHCRWASTSESNSSEEMIFGDMARSHRRRNDYLLGFLYDEPKGEQFYDRSIEITRRGHPPAHRRFLNLQRRARVNSGFE.

Residues M1 to G23 form the signal peptide. Disulfide bonds link C86/C96 and C109/C127. A Phosphoserine modification is found at S90. Residues S137, S138, and S174 each carry the phosphoserine modification.

This sequence belongs to the SPP2 family. Multiply phosphorylated at serine residues. In terms of processing, phosphorylation sites are present in the extracellular medium.

Its subcellular location is the secreted. Could coordinate an aspect of bone turnover. This chain is Secreted phosphoprotein 24 (Spp2), found in Rattus norvegicus (Rat).